A 313-amino-acid chain; its full sequence is Interferon-inducible double-stranded RNA-dependent protein kinase activator A (313 aa).

The segment at Met1 to Thr20 is disordered. 3 sufficient for self-association and interaction with TARBP2 regions span residues Met1–Ala103, Asn102–Ile195, and Ile195–Lys313. Residue Ser18 is modified to Phosphoserine. DRBM domains follow at residues Thr34–Ala101, Asn126–Asn194, and Asp240–Ile308. A phosphoserine mark is found at Ser167, Ser246, and Ser287.

Belongs to the PRKRA family. As to quaternary structure, homodimer. Interacts with DICER1, AGO2 and TARBP2. Also able to interact with dsRNA. Interacts with EIF2AK2/PKR through its DRBM domains. Interacts with DUS2L (via DRBM domain). Interacts with UBC9. Forms a complex with UBC9 and p53/TP53. In terms of processing, phosphorylated at Ser-246 in unstressed cells and at Ser-287 in stressed cells. Phosphorylation at Ser-246 appears to be a prerequisite for subsequent phosphorylation at Ser-287. Phosphorylation at Ser-246 and Ser-287 are necessary for activation of EIF2AK2/PKR under conditions of stress. In terms of tissue distribution, expressed in brain, heart, kidney, liver, lung, muscle, spleen and testis.

The protein localises to the cytoplasm. It localises to the perinuclear region. Its function is as follows. Required for siRNA production by DICER1 and for subsequent siRNA-mediated post-transcriptional gene silencing. Does not seem to be required for processing of pre-miRNA to miRNA by DICER1. Activates EIF2AK2/PKR in the absence of double-stranded RNA (dsRNA), leading to phosphorylation of EIF2S1/EFI2-alpha and inhibition of translation and induction of apoptosis. Promotes UBC9-p53/TP53 association and sumoylation and phosphorylation of p53/TP53 at 'Lys-386' at 'Ser-392' respectively and enhances its activity in a EIF2AK2/PKR-dependent manner. This is Interferon-inducible double-stranded RNA-dependent protein kinase activator A (Prkra) from Mus musculus (Mouse).